We begin with the raw amino-acid sequence, 228 residues long: Deoxyribose-phosphate aldolase (228 aa).

Catalysis depends on Asp96, which acts as the Proton donor/acceptor. Lys157 functions as the Schiff-base intermediate with acetaldehyde in the catalytic mechanism. Lys185 functions as the Proton donor/acceptor in the catalytic mechanism.

The protein belongs to the DeoC/FbaB aldolase family. DeoC type 1 subfamily.

It localises to the cytoplasm. It carries out the reaction 2-deoxy-D-ribose 5-phosphate = D-glyceraldehyde 3-phosphate + acetaldehyde. The protein operates within carbohydrate degradation; 2-deoxy-D-ribose 1-phosphate degradation; D-glyceraldehyde 3-phosphate and acetaldehyde from 2-deoxy-alpha-D-ribose 1-phosphate: step 2/2. Catalyzes a reversible aldol reaction between acetaldehyde and D-glyceraldehyde 3-phosphate to generate 2-deoxy-D-ribose 5-phosphate. This is Deoxyribose-phosphate aldolase from Picosynechococcus sp. (strain ATCC 27264 / PCC 7002 / PR-6) (Agmenellum quadruplicatum).